The sequence spans 391 residues: Glycerol-3-phosphate dehydrogenase [NAD(+)] (391 aa).

NAD(+) is bound by residues 46-51, F78, and F134; that span reads GSGNWG. K157 lines the substrate pocket. A190 contacts NAD(+). K250 functions as the Proton acceptor in the catalytic mechanism. 2 residues coordinate NAD(+): R315 and Q344. 315-316 contributes to the substrate binding site; that stretch reads RN.

This sequence belongs to the NAD-dependent glycerol-3-phosphate dehydrogenase family.

The catalysed reaction is sn-glycerol 3-phosphate + NAD(+) = dihydroxyacetone phosphate + NADH + H(+). The sequence is that of Glycerol-3-phosphate dehydrogenase [NAD(+)] (GPD) from Candida tropicalis (Yeast).